The chain runs to 235 residues: Deoxyribose-phosphate aldolase (235 aa).

D107 functions as the Proton donor/acceptor in the catalytic mechanism. K167 functions as the Schiff-base intermediate with acetaldehyde in the catalytic mechanism. K197 (proton donor/acceptor) is an active-site residue.

The protein belongs to the DeoC/FbaB aldolase family. DeoC type 1 subfamily. In terms of assembly, homotetramer.

It localises to the cytoplasm. The enzyme catalyses 2-deoxy-D-ribose 5-phosphate = D-glyceraldehyde 3-phosphate + acetaldehyde. The protein operates within carbohydrate degradation; 2-deoxy-D-ribose 1-phosphate degradation; D-glyceraldehyde 3-phosphate and acetaldehyde from 2-deoxy-alpha-D-ribose 1-phosphate: step 2/2. Catalyzes a reversible aldol reaction between acetaldehyde and D-glyceraldehyde 3-phosphate to generate 2-deoxy-D-ribose 5-phosphate. This chain is Deoxyribose-phosphate aldolase, found in Aeropyrum pernix (strain ATCC 700893 / DSM 11879 / JCM 9820 / NBRC 100138 / K1).